We begin with the raw amino-acid sequence, 191 residues long: Ureidoglycolate lyase (191 aa).

The protein belongs to the ureidoglycolate lyase family. Homodimer.

The enzyme catalyses (S)-ureidoglycolate = urea + glyoxylate. It functions in the pathway nitrogen metabolism; (S)-allantoin degradation. In terms of biological role, catalyzes the catabolism of the allantoin degradation intermediate (S)-ureidoglycolate, generating urea and glyoxylate. Involved in the utilization of allantoin as secondary nitrogen source when primary sources are limiting. The sequence is that of Ureidoglycolate lyase from Schizosaccharomyces pombe (strain 972 / ATCC 24843) (Fission yeast).